The chain runs to 841 residues: Translation initiation factor IF-2 (841 aa).

Basic and acidic residues-rich tracts occupy residues M1 to K12, A52 to K92, E114 to A170, R188 to R202, and K213 to G235. 2 disordered regions span residues M1 to V24 and A52 to L246. The 171-residue stretch at T340–T510 folds into the tr-type G domain. The G1 stretch occupies residues G349–T356. G349 to T356 lines the GTP pocket. The G2 stretch occupies residues G374 to H378. The interval D396–G399 is G3. GTP contacts are provided by residues D396–H400 and N450–D453. A G4 region spans residues N450–D453. Residues S486–K488 form a G5 region.

Belongs to the TRAFAC class translation factor GTPase superfamily. Classic translation factor GTPase family. IF-2 subfamily.

It is found in the cytoplasm. One of the essential components for the initiation of protein synthesis. Protects formylmethionyl-tRNA from spontaneous hydrolysis and promotes its binding to the 30S ribosomal subunits. Also involved in the hydrolysis of GTP during the formation of the 70S ribosomal complex. The sequence is that of Translation initiation factor IF-2 from Actinobacillus pleuropneumoniae serotype 5b (strain L20).